Reading from the N-terminus, the 521-residue chain is Potassium/proton antiporter CemA (521 aa).

The next 5 membrane-spanning stretches (helical) occupy residues 68-88, 294-314, 399-419, 446-466, and 481-501; these read FVFIIYWSVLECKTSIYLLNI, ALASLQYLGCLILIPWGISFP, ILHLLTDIIYFAIPSASFISG, ILLLTDSCIGFHSPHGWEILI, and IISCFVSTFPVISDTVFKYWI.

The protein belongs to the CemA family.

It is found in the plastid. The protein resides in the chloroplast inner membrane. It carries out the reaction K(+)(in) + H(+)(out) = K(+)(out) + H(+)(in). Contributes to K(+)/H(+) antiport activity by supporting proton efflux to control proton extrusion and homeostasis in chloroplasts in a light-dependent manner to modulate photosynthesis. Prevents excessive induction of non-photochemical quenching (NPQ) under continuous-light conditions. Indirectly promotes efficient inorganic carbon uptake into chloroplasts. This Huperzia lucidula (Shining clubmoss) protein is Potassium/proton antiporter CemA.